The following is a 356-amino-acid chain: Probable protein phosphatase 2C T23F11.1 (356 aa).

The PPM-type phosphatase domain maps to 23 to 286; sequence LVGSSCMQGW…DNMTVVLVGL (264 aa). Mn(2+) is bound by residues D59, G60, D228, and D277. Residues 336 to 356 form a disordered region; that stretch reads NAANQEEEEDDNEPAPANFQV.

Belongs to the PP2C family. Mg(2+) serves as cofactor. Mn(2+) is required as a cofactor.

The catalysed reaction is O-phospho-L-seryl-[protein] + H2O = L-seryl-[protein] + phosphate. The enzyme catalyses O-phospho-L-threonyl-[protein] + H2O = L-threonyl-[protein] + phosphate. The polypeptide is Probable protein phosphatase 2C T23F11.1 (ppm-2) (Caenorhabditis elegans).